The chain runs to 98 residues: NADH-ubiquinone oxidoreductase chain 4L (98 aa).

The next 3 helical transmembrane spans lie at 1–21 (MHYI…GALL), 29–49 (SLLC…LIAL), and 61–81 (IILL…LVMV).

It belongs to the complex I subunit 4L family. Core subunit of respiratory chain NADH dehydrogenase (Complex I) which is composed of 45 different subunits.

The protein localises to the mitochondrion inner membrane. It catalyses the reaction a ubiquinone + NADH + 5 H(+)(in) = a ubiquinol + NAD(+) + 4 H(+)(out). Functionally, core subunit of the mitochondrial membrane respiratory chain NADH dehydrogenase (Complex I) which catalyzes electron transfer from NADH through the respiratory chain, using ubiquinone as an electron acceptor. Part of the enzyme membrane arm which is embedded in the lipid bilayer and involved in proton translocation. In Procavia capensis (Rock hyrax), this protein is NADH-ubiquinone oxidoreductase chain 4L (MT-ND4L).